A 635-amino-acid chain; its full sequence is ATP-dependent zinc metalloprotease FtsH (635 aa).

The Cytoplasmic segment spans residues 1–4; that stretch reads MVKN. A helical membrane pass occupies residues 5–25; it reads LVLWVVVAVIMMTAYQSFNSS. Residues 26-97 lie on the Periplasmic side of the membrane; the sequence is SVENSTDYTT…VEGTPFERRG (72 aa). A helical membrane pass occupies residues 98–118; it reads FLSQILISWFPMLFLVGVWVF. Residues 119-635 lie on the Cytoplasmic side of the membrane; sequence FMRQMQGGGG…AVENTDDFNV (517 aa). 191 to 198 contacts ATP; that stretch reads GPPGTGKT. His413 lines the Zn(2+) pocket. Glu414 is a catalytic residue. Zn(2+) is bound by residues His417 and Asp491. A disordered region spans residues 593–635; sequence NREPVTPPSGWGEPKTQQAAYANSTTNDTKPESAVENTDDFNV. Over residues 607-620 the composition is skewed to polar residues; sequence KTQQAAYANSTTND.

The protein in the central section; belongs to the AAA ATPase family. This sequence in the C-terminal section; belongs to the peptidase M41 family. As to quaternary structure, homohexamer. Zn(2+) is required as a cofactor.

The protein resides in the cell inner membrane. Its function is as follows. Acts as a processive, ATP-dependent zinc metallopeptidase for both cytoplasmic and membrane proteins. Plays a role in the quality control of integral membrane proteins. This chain is ATP-dependent zinc metalloprotease FtsH, found in Haemophilus influenzae (strain ATCC 51907 / DSM 11121 / KW20 / Rd).